The sequence spans 254 residues: Ribosomal RNA small subunit methyltransferase G (254 aa).

The insert stretch occupies residues 84-109 (NTESKTSLNNAETKNTNEALLTSEPF). S-adenosyl-L-methionine contacts are provided by residues G115, F120, 171-172 (AE), and R185.

It belongs to the methyltransferase superfamily. RNA methyltransferase RsmG family.

The protein localises to the cytoplasm. Specifically methylates the N7 position of a guanine in 16S rRNA. The sequence is that of Ribosomal RNA small subunit methyltransferase G from Treponema denticola (strain ATCC 35405 / DSM 14222 / CIP 103919 / JCM 8153 / KCTC 15104).